We begin with the raw amino-acid sequence, 181 residues long: Dual-action ribosomal maturation protein DarP (181 aa).

Positions 1–24 are disordered; the sequence is MTGIKRPMSQYQDDNEWEDWGPSK.

Belongs to the DarP family.

The protein localises to the cytoplasm. Functionally, member of a network of 50S ribosomal subunit biogenesis factors which assembles along the 30S-50S interface, preventing incorrect 23S rRNA structures from forming. Promotes peptidyl transferase center (PTC) maturation. The polypeptide is Dual-action ribosomal maturation protein DarP (Aeromonas hydrophila subsp. hydrophila (strain ATCC 7966 / DSM 30187 / BCRC 13018 / CCUG 14551 / JCM 1027 / KCTC 2358 / NCIMB 9240 / NCTC 8049)).